Here is a 696-residue protein sequence, read N- to C-terminus: Putative cyclic nucleotide-gated ion channel 13 (696 aa).

At 1–81 (MAFGRNNRVR…QGSFLQNWNK (81 aa)) the chain is on the cytoplasmic side. Residues 45-65 (KPLSFGSHNKKRDSNSSTTTQ) are disordered. The chain crosses the membrane as a helical span at residues 82–102 (IFLFASVIALAIDPLFFYIPI). Residues 103–116 (VDGERHCLNLHRNL) are Extracellular-facing. Residues 117–137 (EIAASVLRTFIDAFYIIHIVF) traverse the membrane as a helical segment. At 138–170 (QFRTAYISPSSRVFGRGELVDDPKAIAIKYLSS) the chain is on the cytoplasmic side. The helical transmembrane segment at 171-191 (YFIIDLLSILPLPQLVVLAVI) threads the bilayer. Over 192 to 204 (PNVNKPVSLITKD) the chain is Extracellular. A helical transmembrane segment spans residues 205 to 225 (YLITVIFTQYIPRILRIYPLY). Topologically, residues 226–243 (TEVTRTSGIVTETAWAGA) are cytoplasmic. The chain crosses the membrane as a helical span at residues 244–264 (AWNLSLYMLASHVFGALWYLI). Residues 265–367 (SVEREDRCWR…GQNLNTSKFV (103 aa)) are Extracellular-facing. A helical transmembrane segment spans residues 368–388 (GEIIFAVSICISGLVLFALLI). Over 389 to 696 (GNMQKYLEST…SEPDFSLRNP (308 aa)) the chain is Cytoplasmic. A nucleoside 3',5'-cyclic phosphate-binding positions include 474 to 598 (LFEI…SKQL) and E545. The calmodulin-binding stretch occupies residues 590-605 (FRRLHSKQLQHTFRFY). Positions 610–639 (RTWGASFIQAAWRRHCRRKLARSLTEEEDR) constitute an IQ domain. Residues 677-696 (NNLPLLPPKPSEPDFSLRNP) are disordered.

This sequence belongs to the cyclic nucleotide-gated cation channel (TC 1.A.1.5) family. In terms of assembly, homotetramer or heterotetramer.

The protein localises to the cell membrane. Functionally, putative cyclic nucleotide-gated ion channel. In Arabidopsis thaliana (Mouse-ear cress), this protein is Putative cyclic nucleotide-gated ion channel 13 (CNGC13).